Reading from the N-terminus, the 414-residue chain is Histidine--tRNA ligase (414 aa).

It belongs to the class-II aminoacyl-tRNA synthetase family. Homodimer.

It localises to the cytoplasm. It carries out the reaction tRNA(His) + L-histidine + ATP = L-histidyl-tRNA(His) + AMP + diphosphate + H(+). The protein is Histidine--tRNA ligase of Solibacter usitatus (strain Ellin6076).